The chain runs to 147 residues: Large ribosomal subunit protein uL13 (147 aa).

The protein belongs to the universal ribosomal protein uL13 family. Part of the 50S ribosomal subunit.

This protein is one of the early assembly proteins of the 50S ribosomal subunit, although it is not seen to bind rRNA by itself. It is important during the early stages of 50S assembly. The polypeptide is Large ribosomal subunit protein uL13 (Latilactobacillus sakei subsp. sakei (strain 23K) (Lactobacillus sakei subsp. sakei)).